The sequence spans 739 residues: NAD(P)H-quinone oxidoreductase subunit 5, chloroplastic (739 aa).

16 helical membrane passes run 9 to 29 (WIIP…LLLV), 39 to 59 (IWAF…ADLA), 89 to 109 (IDPL…MVLI), 125 to 145 (FAYM…SNLI), 147 to 167 (IYIF…FWFT), 185 to 205 (GDFG…SFEF), 224 to 244 (LFAA…SAQF), 258 to 278 (TPIS…FLVA), 280 to 300 (LLPL…IGII), 327 to 347 (LGYI…FHLI), 354 to 374 (ALLF…VGYS), 396 to 416 (TTFF…CFWS), 425 to 445 (WLYS…TAFY), 544 to 564 (LFPM…GIPF), 603 to 623 (IYSV…YGSV), and 719 to 739 (YIFL…FFSF).

Belongs to the complex I subunit 5 family. In terms of assembly, NDH is composed of at least 16 different subunits, 5 of which are encoded in the nucleus.

Its subcellular location is the plastid. It is found in the chloroplast thylakoid membrane. It catalyses the reaction a plastoquinone + NADH + (n+1) H(+)(in) = a plastoquinol + NAD(+) + n H(+)(out). The enzyme catalyses a plastoquinone + NADPH + (n+1) H(+)(in) = a plastoquinol + NADP(+) + n H(+)(out). NDH shuttles electrons from NAD(P)H:plastoquinone, via FMN and iron-sulfur (Fe-S) centers, to quinones in the photosynthetic chain and possibly in a chloroplast respiratory chain. The immediate electron acceptor for the enzyme in this species is believed to be plastoquinone. Couples the redox reaction to proton translocation, and thus conserves the redox energy in a proton gradient. The chain is NAD(P)H-quinone oxidoreductase subunit 5, chloroplastic (ndhF) from Acorus calamus var. americanus (American sweet flag).